Reading from the N-terminus, the 133-residue chain is Aspartate 1-decarboxylase (133 aa).

S26 functions as the Schiff-base intermediate with substrate; via pyruvic acid in the catalytic mechanism. At S26 the chain carries Pyruvic acid (Ser). Residue T58 participates in substrate binding. The Proton donor role is filled by Y59. Residue 74–76 (GAA) coordinates substrate.

It belongs to the PanD family. In terms of assembly, heterooctamer of four alpha and four beta subunits. The cofactor is pyruvate. Post-translationally, is synthesized initially as an inactive proenzyme, which is activated by self-cleavage at a specific serine bond to produce a beta-subunit with a hydroxyl group at its C-terminus and an alpha-subunit with a pyruvoyl group at its N-terminus.

The protein resides in the cytoplasm. The catalysed reaction is L-aspartate + H(+) = beta-alanine + CO2. The protein operates within cofactor biosynthesis; (R)-pantothenate biosynthesis; beta-alanine from L-aspartate: step 1/1. Functionally, catalyzes the pyruvoyl-dependent decarboxylation of aspartate to produce beta-alanine. The protein is Aspartate 1-decarboxylase of Legionella pneumophila (strain Lens).